Consider the following 1217-residue polypeptide: METSSISTVEDKPPQHQVFINFRGADLRRRFVSHLVTALKLNNINVFIDDYEDRGQPLDVLLKRIEESKIVLAIFSGNYTESVWCVRELEKIKDCTDEGTLVAIPIFYKLEPSTVRDLKGKFGDRFRSMAKGDERKKKWKEAFNLIPNIMGITIDKKSVESEKVNEIVKAVKTALTGIPPEGSHNAVVGALGNSNAGTSSGDKKHETFGNEQRLKDLEEKLDRDKYKGTRIIGVVGMPGIGKTTLLKELYKTWQGKFSRHALIDQIRVKSKHLELDRLPQMLLGELSKLNNPHVDNLKDPYSQLHERKVLVVLDDVSKREQIDALREILDWIKEGKEGSRVVIATSDMSLTNGLVDDTYMVQNLNHRDSLQLFHYHAFIDDQANPQKKDFMKLSEGFVHYARGHPLALKVLGGELNKKSMDHWNSKMKKLAQSPSPNIVSVFQVSYDELTTAQKDAFLDIACFRSQDKDYVESLLASSDLGSAEAMSAVKSLTDKFLINTCDGRVEMHDLLYKFSREIDLKASNQDGSRQRRLWLHQHIIKGGIINVLQNKMKAANVRGIFLDLSEVEDETSLDRDHFINMGNLRYLKFYNSHCPQECKTNNKINIPDKLKLPLKEVRCLHWLKFPLETLPNDFNPINLVDLKLPYSEMEQLWEGDKDTPCLRWVDLNHSSKLCSLSGLSKAEKLQRLNLEGCTTLKAFPHDMKKMKMLAFLNLKGCTSLESLPEMNLISLKTLTLSGCSTFKEFPLISDNIETLYLDGTAISQLPMNMEKLQRLVVLNMKDCKMLEEIPGRVGELKALQELILSDCLNLKIFPEIDISFLNILLLDGTAIEVMPQLPSVQYLCLSRNAKISCLPVGISQLSQLKWLDLKYCTSLTSVPEFPPNLQCLDAHGCSSLKTVSKPLARIMPTEQNHSTFIFTNCENLEQAAKEEITSYAQRKCQLLSYARKRYNGGLVSESLFSTCFPGCEVPSWFCHETVGSELEVKLLPHWHDKKLAGIALCAVVSCLDPQDQVSRLSVTCTFKVKDEDKSWVPYTCPVGSWTRHGGGKDKIELDHVFIGYTSCPHTIKCHEEGNSDECNPTEASLKFTVTGGTSENGKYKVLKCGLSLVYAKDKDKNSALETKYDMLIGKSFQETSEGVDGRVKKTKGKYVMPVEKNFQETTEGVDGRVKKKKKTRMDNGRPKKKQRSGRDDNQTRMQVELQEGNINSVIMHTVKNF.

Residues 14–175 (PQHQVFINFR…EIVKAVKTAL (162 aa)) form the TIR domain. Residue glutamate 88 is part of the active site. The region spanning 211–472 (EQRLKDLEEK…FRSQDKDYVE (262 aa)) is the NB-ARC domain. LRR repeat units follow at residues 260–285 (HALIDQIRVKSKHLELDRLPQMLLGE), 436–459 (PNIVSVFQVSYDELTTAQKDAFLD), 614–636 (LKEVRCLHWLKFPLETLPNDFNP), 637–659 (INLVDLKLPYSEMEQLWEGDKDT), 682–706 (AEKLQRLNLEGCTTLKAFPHDMKKM), 708–728 (MLAFLNLKGCTSLESLPEMNL), 729–749 (ISLKTLTLSGCSTFKEFPLIS), 750–774 (DNIETLYLDGTAISQLPMNMEKLQR), 796–818 (LKALQELILSDCLNLKIFPEIDI), 819–842 (SFLNILLLDGTAIEVMPQLPSVQY), and 861–887 (LSQLKWLDLKYCTSLTSVPEFPPNLQC). The segment at 1162–1195 (TEGVDGRVKKKKKTRMDNGRPKKKQRSGRDDNQT) is disordered. A Nuclear localization signal motif is present at residues 1170–1177 (KKKKKTRM).

Interacts with EDS1.

It localises to the nucleus. The enzyme catalyses NAD(+) + H2O = ADP-D-ribose + nicotinamide + H(+). Its function is as follows. Disease resistance (R) protein that specifically recognizes the AvrRps4 type III effector avirulence protein from Pseudomonas syringae. Resistance proteins guard the plant against pathogens that contain an appropriate avirulence protein via an indirect interaction with this avirulence protein. That triggers a defense system including the hypersensitive response, which restricts the pathogen growth. The combined presence of both regular and alternative RPS4 transcripts with truncated open reading frames (ORFs) is necessary for function. RPS4 function is regulated at multiple levels, including gene expression, alternative splicing, and protein stability. Acts as a disease resistance protein involved in resistance to fungal and bacterial pathogens, including R.solanacearum, P.syringae pv. tomato and C.higginsianum. In presence of RRS1, elicites an EDS1-dependent hypersensitive response. The chain is Disease resistance protein RPS4 from Arabidopsis thaliana (Mouse-ear cress).